A 233-amino-acid chain; its full sequence is Orotidine 5'-phosphate decarboxylase (233 aa).

Substrate-binding positions include aspartate 13, lysine 35, 62–71 (DLKFHDIPNT), threonine 122, arginine 182, glutamine 191, glycine 211, and arginine 212. Lysine 64 (proton donor) is an active-site residue.

The protein belongs to the OMP decarboxylase family. Type 1 subfamily. Homodimer.

It catalyses the reaction orotidine 5'-phosphate + H(+) = UMP + CO2. It participates in pyrimidine metabolism; UMP biosynthesis via de novo pathway; UMP from orotate: step 2/2. In terms of biological role, catalyzes the decarboxylation of orotidine 5'-monophosphate (OMP) to uridine 5'-monophosphate (UMP). The sequence is that of Orotidine 5'-phosphate decarboxylase from Pseudomonas putida (strain GB-1).